The sequence spans 1407 residues: DNA-directed RNA polymerase subunit beta' (1407 aa).

The Zn(2+) site is built by Cys70, Cys72, Cys85, and Cys88. 3 residues coordinate Mg(2+): Asp460, Asp462, and Asp464. Residues Cys814, Cys888, Cys895, and Cys898 each contribute to the Zn(2+) site. N6-acetyllysine is present on Lys972.

The protein belongs to the RNA polymerase beta' chain family. In terms of assembly, the RNAP catalytic core consists of 2 alpha, 1 beta, 1 beta' and 1 omega subunit. When a sigma factor is associated with the core the holoenzyme is formed, which can initiate transcription. Mg(2+) is required as a cofactor. Zn(2+) serves as cofactor.

It carries out the reaction RNA(n) + a ribonucleoside 5'-triphosphate = RNA(n+1) + diphosphate. Functionally, DNA-dependent RNA polymerase catalyzes the transcription of DNA into RNA using the four ribonucleoside triphosphates as substrates. This is DNA-directed RNA polymerase subunit beta' from Shigella boydii serotype 18 (strain CDC 3083-94 / BS512).